Here is a 280-residue protein sequence, read N- to C-terminus: Urease accessory protein UreD (280 aa).

It belongs to the UreD family. UreD, UreF and UreG form a complex that acts as a GTP-hydrolysis-dependent molecular chaperone, activating the urease apoprotein by helping to assemble the nickel containing metallocenter of UreC. The UreE protein probably delivers the nickel.

The protein localises to the cytoplasm. Its function is as follows. Required for maturation of urease via the functional incorporation of the urease nickel metallocenter. In Staphylococcus saprophyticus subsp. saprophyticus (strain ATCC 15305 / DSM 20229 / NCIMB 8711 / NCTC 7292 / S-41), this protein is Urease accessory protein UreD.